The sequence spans 278 residues: Diaminopimelate epimerase (278 aa).

Substrate contacts are provided by Asn-11 and Asn-63. Cys-72 serves as the catalytic Proton donor. Substrate is bound by residues 73-74, Asn-160, Asn-193, and 211-212; these read GN and ER. Catalysis depends on Cys-220, which acts as the Proton acceptor. 221–222 provides a ligand contact to substrate; that stretch reads GT.

The protein belongs to the diaminopimelate epimerase family. As to quaternary structure, homodimer.

Its subcellular location is the cytoplasm. It catalyses the reaction (2S,6S)-2,6-diaminopimelate = meso-2,6-diaminopimelate. It participates in amino-acid biosynthesis; L-lysine biosynthesis via DAP pathway; DL-2,6-diaminopimelate from LL-2,6-diaminopimelate: step 1/1. In terms of biological role, catalyzes the stereoinversion of LL-2,6-diaminopimelate (L,L-DAP) to meso-diaminopimelate (meso-DAP), a precursor of L-lysine and an essential component of the bacterial peptidoglycan. This is Diaminopimelate epimerase from Desulforudis audaxviator (strain MP104C).